A 524-amino-acid chain; its full sequence is MGIVINLLLLVLAALVAFVAGFFIGRYFLERIGTTKVLEAEERAVQIVQEAQKEANEYKELKVSEVNQEWKKKRREFEQDVLIKNNKFAQLQKQLQQREAQLKKQSQDVRDAERKLQDQRKEVEQLSDSVKLRATELERVIVEQNQRLESISNLQADEARQMLIDNMVTQAREEASNTIHRIHEEAEQQATRMAEKTLITAIQRISFEQTTENALSVVHIQSDELKGRIIGREGRNIKAFENATGVDIIVDDTPEVVILSCFDPLRRELAKLTLKKLLADGIIHPVAIEKAYADATKEIDDVVYSAGEEVAASLQLNDIPTEVIALLGKMKFHTVYGQNLLQHSREVAMLAGVMAAELKLDARMAKRAGLLHDIGLVLPESDEPHAITGMNFMKKFNESDQLLNAIGAHHGDMEKESPLADLVDAANTISLSRPGARGAVTADGNVKRLESLEEIAKGFPGVLKTYALQAGREIRVIVEGDNVSDSQADMLAHDIARKIESEAQYPGQIKVSIIREKRSVAYAK.

Residues 3–23 form a helical membrane-spanning segment; it reads IVINLLLLVLAALVAFVAGFF. The 67-residue stretch at 214 to 280 folds into the KH domain; the sequence is ALSVVHIQSD…KLTLKKLLAD (67 aa). Residues 340–432 enclose the HD domain; it reads LLQHSREVAM…VDAANTISLS (93 aa).

It belongs to the RNase Y family.

The protein resides in the cell membrane. Functionally, endoribonuclease that initiates mRNA decay. In Chlorobium chlorochromatii (strain CaD3), this protein is Ribonuclease Y.